Here is a 342-residue protein sequence, read N- to C-terminus: Protein-glutamate methylesterase/protein-glutamine glutaminase 4 (342 aa).

In terms of domain architecture, Response regulatory spans 2–119; it reads NIGIVNDLPL…GGSADPSQPL (118 aa). The residue at position 53 (D53) is a 4-aspartylphosphate. The region spanning 144–337 is the CheB-type methylesterase domain; the sequence is PAPQGALPPL…DQLISLVQRN (194 aa). Catalysis depends on residues S159, H186, and D279.

The protein belongs to the CheB family. In terms of processing, phosphorylated by CheA. Phosphorylation of the N-terminal regulatory domain activates the methylesterase activity.

The protein resides in the cytoplasm. The enzyme catalyses [protein]-L-glutamate 5-O-methyl ester + H2O = L-glutamyl-[protein] + methanol + H(+). It catalyses the reaction L-glutaminyl-[protein] + H2O = L-glutamyl-[protein] + NH4(+). Involved in chemotaxis. Part of a chemotaxis signal transduction system that modulates chemotaxis in response to various stimuli. Catalyzes the demethylation of specific methylglutamate residues introduced into the chemoreceptors (methyl-accepting chemotaxis proteins or MCP) by CheR. Also mediates the irreversible deamidation of specific glutamine residues to glutamic acid. The polypeptide is Protein-glutamate methylesterase/protein-glutamine glutaminase 4 (Burkholderia thailandensis (strain ATCC 700388 / DSM 13276 / CCUG 48851 / CIP 106301 / E264)).